The following is a 262-amino-acid chain: MIEDLHVHSTMSDGSDTFEQVLEQAAQRGVERLAFTNHDTTAGLTAARELGERLGVQVVGGIEVSAYDFERGRKVHILGLGVEEGAPALAALCGSTLERRHANSLWQLDRLVEAGYEVDVERALELGRASTCLYKQHLMAALTSEPYPSAAYRTLYRSLFKNGGICDRDIDYVDARDAVRVVVEDGGLAVLAHPGQLDSYDLLPDLVECGLGGIERFHPDHTLADHARCAELAVRYRLVCTGGSDYHGKFGRVPHVGFRVPA.

Positions 6, 8, 13, 38, 63, 76, 193, 245, and 247 each coordinate Mn(2+).

The protein belongs to the PHP family. It depends on Mn(2+) as a cofactor.

It catalyses the reaction alpha-D-ribose 1,2-cyclic phosphate 5-phosphate + H2O = D-ribose 2,5-bisphosphate + H(+). The enzyme catalyses D-ribose 2,5-bisphosphate + H2O = D-ribose 5-phosphate + phosphate. Its function is as follows. Involved in degradation of methylphosphonate. Catalyzes the hydrolysis of the phosphate ester at carbon-1 of 5-phospho-D-ribose 1,2-cyclic phosphate to form ribose 2,5-bisphosphate. This intermediate is then hydrolyzed to ribose-5-phosphate and inorganic phosphate. The chain is Phosphoribosyl 1,2-cyclic phosphate 1,2-diphosphodiesterase from Eggerthella lenta (strain ATCC 25559 / DSM 2243 / CCUG 17323 / JCM 9979 / KCTC 3265 / NCTC 11813 / VPI 0255 / 1899 B) (Eubacterium lentum).